Reading from the N-terminus, the 240-residue chain is 2-C-methyl-D-erythritol 2,4-cyclodiphosphate synthase, apicoplast (240 aa).

A divalent metal cation is bound by residues aspartate 71 and histidine 73. Residues 71–73 and 115–116 each bind 4-CDP-2-C-methyl-D-erythritol 2-phosphate; these read DIH and HS. Histidine 123 contributes to the a divalent metal cation binding site. Residues 137 to 139, 142 to 146, 181 to 187, and 212 to 214 contribute to the 4-CDP-2-C-methyl-D-erythritol 2-phosphate site; these read DIG, FPDKD, AQVPKIS, and GKT.

It belongs to the IspF family. In terms of assembly, homotrimer. Requires a divalent metal cation as cofactor.

Its subcellular location is the plastid. The protein resides in the apicoplast. The catalysed reaction is 4-CDP-2-C-methyl-D-erythritol 2-phosphate = 2-C-methyl-D-erythritol 2,4-cyclic diphosphate + CMP. It participates in isoprenoid biosynthesis; isopentenyl diphosphate biosynthesis via DXP pathway; isopentenyl diphosphate from 1-deoxy-D-xylulose 5-phosphate: step 4/6. In the mevalonate-independent isoprenoid biosynthetic pathway, converts 4-diphosphocytidyl-2C-methyl-D-erythritol 2-phosphate into 2C-methyl-D-erythritol 2,4-cyclodiphosphate and CMP. In Plasmodium falciparum (isolate 3D7), this protein is 2-C-methyl-D-erythritol 2,4-cyclodiphosphate synthase, apicoplast.